The primary structure comprises 798 residues: Putative antiporter subunit mnhA2 (798 aa).

Helical transmembrane passes span 1-21 (MSLVYLLSTLILIMVILLFTL), 33-53 (IALLAPIVASVYFLYQLPSVM), 78-98 (GLSLFFSLLISLIGLAVVYYA), 109-129 (LPRFYVYLLLFMFSMLGIVTA), 133-153 (ILMYVFWELTSVSSFLLIVYW), 167-187 (FMITVFGGLALLAGFIMIYIV), 209-229 (FIPIIILLLLGAFTKSAQFPF), 241-261 (TPVSAYLHSATMVKAGIFLLF), 272-292 (FYIYSVTFVGLITMIFGAVNA), 300-320 (AILAYSTISQLGMIVSMVGLG), 337-357 (MILFAALFHLMNHALYKGALF), 381-401 (VFPITHIVMLLSALSMAGIPF), 431-451 (IITVIGVIASIFTLVYGVYMI), 472-492 (PFLFTLPSAIMMILLPVIFFI), 526-546 (GFNLPLILSLIVIVVGFIMAL), 593-613 (ITITLLIFSMVVIYGMIQAGF), 625-645 (GPIEVITLIVVFVLGIALTFI), 649-669 (LTMVVLNGIIGYCVTIFFILM), 674-694 (LALTQLVVETITTILFIVSFS), 710-730 (AVKIIVSLLMAVIVVTLVFIA), and 766-786 (IDTLFEGMVLIIAGLGIYTLL).

This sequence belongs to the CPA3 antiporters (TC 2.A.63) subunit A family. In terms of assembly, may form a heterooligomeric complex that consists of seven subunits: mnhA2, mnhB2, mnhC2, mnhD2, mnhE2, mnhF2 and mnhG2.

It localises to the cell membrane. In Staphylococcus saprophyticus subsp. saprophyticus (strain ATCC 15305 / DSM 20229 / NCIMB 8711 / NCTC 7292 / S-41), this protein is Putative antiporter subunit mnhA2 (mnhA2).